A 161-amino-acid chain; its full sequence is Large ribosomal subunit protein uL15 (161 aa).

The segment at 1–43 (MKLSEISDNPGARKKRMRIGRGIGSGKGKTGGRGGKGQTARSG) is disordered. Gly residues predominate over residues 21–37 (RGIGSGKGKTGGRGGKG).

Belongs to the universal ribosomal protein uL15 family. Part of the 50S ribosomal subunit.

Functionally, binds to the 23S rRNA. The polypeptide is Large ribosomal subunit protein uL15 (Rhodopseudomonas palustris (strain BisB5)).